The sequence spans 197 residues: Beta-crystallin A2 (197 aa).

Residues M1–P11 form an N-terminal arm region. 2 consecutive Beta/gamma crystallin 'Greek key' domains span residues A12 to N52 and G53 to L99. Residues C100 to D105 form a connecting peptide region. 2 Beta/gamma crystallin 'Greek key' domains span residues S106–S147 and G148–Q196.

The protein belongs to the beta/gamma-crystallin family. In terms of assembly, homo/heterodimer, or complexes of higher-order. The structure of beta-crystallin oligomers seems to be stabilized through interactions between the N-terminal arms.

Its function is as follows. Crystallins are the dominant structural components of the vertebrate eye lens. This chain is Beta-crystallin A2 (CRYBA2), found in Homo sapiens (Human).